Consider the following 38-residue polypeptide: Potassium channel toxin alpha-KTx 2.10 (38 aa).

Intrachain disulfides connect Cys7–Cys29, Cys13–Cys34, and Cys17–Cys36.

As to expression, expressed by the venom gland.

The protein localises to the secreted. In terms of biological role, blocks human voltage-gated potassium (Kv) channel Kv1.2/KCNA2. Does not inhibit human Kv1.1/KCNA1 at 100nM concentration. This Centruroides bonito (Scorpion) protein is Potassium channel toxin alpha-KTx 2.10.